Consider the following 287-residue polypeptide: Lycopene elongase/hydratase (287 aa).

7 helical membrane passes run 15–35 (ISWVNTAYPFGLAYLLNAGEI), 37–57 (WLFWLGIVFFLIPYNIAMYGI), 97–117 (IPFLVILFIFGTWMSSLWLTI), 137–157 (FIDALTSSTHFTSPALIGATI), 166–186 (MWIALGSFFLWGMASQILGAV), 218–238 (LLAAVLVTTLPNPAWIIGIAI), and 265–285 (VFLWLNYFVGAVITILLIAIH).

Belongs to the UbiA prenyltransferase family.

The protein resides in the cell membrane. It carries out the reaction all-trans-lycopene + dimethylallyl diphosphate + A + H2O = nonaflavuxanthin + AH2 + diphosphate. The enzyme catalyses nonaflavuxanthin + dimethylallyl diphosphate + A + H2O = flavuxanthin + AH2 + diphosphate. Its pathway is carotenoid biosynthesis. Its function is as follows. Catalyzes the elongation of the C(40) carotenoid all-trans-lycopene to the acyclic C(50) carotenoid flavuxanthin during decaprenoxanthin biosynthesis. Acts as a bifunctional enzyme that catalyzes the elongation of lycopene by attaching a C(5) isoprene unit at C-2, as well as the hydroxylation of the new isoprene unit. The enzyme acts at both ends of the substrate, forming the C(50) carotenoid flavuxanthin via the C(45) intermediate nonaflavuxanthin. The chain is Lycopene elongase/hydratase from Corynebacterium glutamicum (Brevibacterium saccharolyticum).